The following is a 273-amino-acid chain: Large ribosomal subunit protein uL2 (273 aa).

2 disordered regions span residues 31–50 (APLLDSKSKTGGRNNLGRIT) and 221–273 (RGTA…RRGK). The segment covering 253 to 273 (KGKKTRHNKRTDKYIVRRRGK) has biased composition (basic residues).

It belongs to the universal ribosomal protein uL2 family. As to quaternary structure, part of the 50S ribosomal subunit. Forms a bridge to the 30S subunit in the 70S ribosome.

One of the primary rRNA binding proteins. Required for association of the 30S and 50S subunits to form the 70S ribosome, for tRNA binding and peptide bond formation. It has been suggested to have peptidyltransferase activity; this is somewhat controversial. Makes several contacts with the 16S rRNA in the 70S ribosome. This is Large ribosomal subunit protein uL2 from Actinobacillus pleuropneumoniae serotype 7 (strain AP76).